The sequence spans 586 residues: MKAIIEYLLKQALINLQQSGEMPIDLEIEIKVENAKDPAHGDYATNLALVLAKPCRQAPKVLAERLVAVIPSDPSVEKIEIAGAGFINFFMRNTARSLIISEILNKGKEFGRGNLGQSQKVLIEFVSANPTGPLHVGHGRGAAFGATLGNVLKAAGYDVTLEYYVNDAGRQMNILAVSVWLRYLELAGEPIVFPANGYKGQYVYEIAQEMWSEQGNQFVHPWISVVENLPADEPEGGDKETYIDAIIARAQSLLGKDGFANFHQHALKTVLDDIKDDLQAFGVRFDSWFSEQSLFEDGSIEKGIQALKDRGHTYEREGALWFRATDFGDEKDRVLVRANGQTTYFASDVAYHWNKYDRGFDRVIDIFGADHHGYVTRIKTAVKALGHDESALDVILVQFAILYRGGDRVQMSTRSGSFVTLRELREEVGNDAARYFYVARKPEQHMDFDLDLAKSESSDNPVYYIQYAHARICSVLRQLKERGLKWDKDMGLKNLDLLEQQHETTLISLIARYPEVIQSAAASCEPHQLAYYLRELANGLHSYYNAIQLLCEQEQLRCARLCLLESVRQVLNNGLAILGVSAPESM.

The 'HIGH' region signature appears at 128–138 (ANPTGPLHVGH).

It belongs to the class-I aminoacyl-tRNA synthetase family. As to quaternary structure, monomer.

It is found in the cytoplasm. It carries out the reaction tRNA(Arg) + L-arginine + ATP = L-arginyl-tRNA(Arg) + AMP + diphosphate. This is Arginine--tRNA ligase from Legionella pneumophila (strain Corby).